The primary structure comprises 247 residues: Fumarate reductase iron-sulfur subunit (247 aa).

Tyr12 is a binding site for a menaquinone. Positions 14–94 (PEIESAPTFQ…PGPVRVEPMR (81 aa)) constitute a 2Fe-2S ferredoxin-type domain. Cys56, Cys61, and Cys76 together coordinate [2Fe-2S] cluster. The region spanning 140–169 (LDAFKQFSMCINCMLCYSACPVYALDPDFL) is the 4Fe-4S ferredoxin-type domain. 3 residues coordinate [4Fe-4S] cluster: Cys149, Cys152, and Cys155. The [3Fe-4S] cluster site is built by Cys159, Cys205, and Cys211. Cys215 serves as a coordination point for [4Fe-4S] cluster. 226 to 229 (QRYK) contacts a menaquinone.

The protein belongs to the succinate dehydrogenase/fumarate reductase iron-sulfur protein family. As to quaternary structure, fumarate dehydrogenase forms part of an enzyme complex containing four subunits: a flavoprotein, an iron-sulfur, and two hydrophobic anchor proteins. The cofactor is [2Fe-2S] cluster. [3Fe-4S] cluster serves as cofactor. It depends on [4Fe-4S] cluster as a cofactor.

It localises to the cell membrane. It catalyses the reaction a quinone + succinate = fumarate + a quinol. The enzyme catalyses a menaquinone + succinate = a menaquinol + fumarate. This chain is Fumarate reductase iron-sulfur subunit (frdB), found in Mycobacterium tuberculosis (strain CDC 1551 / Oshkosh).